The primary structure comprises 504 residues: ATP synthase subunit alpha (504 aa).

171–178 contributes to the ATP binding site; that stretch reads GDRQTGKT.

Belongs to the ATPase alpha/beta chains family. In terms of assembly, F-type ATPases have 2 components, CF(1) - the catalytic core - and CF(0) - the membrane proton channel. CF(1) has five subunits: alpha(3), beta(3), gamma(1), delta(1), epsilon(1). CF(0) has three main subunits: a(1), b(2) and c(9-12). The alpha and beta chains form an alternating ring which encloses part of the gamma chain. CF(1) is attached to CF(0) by a central stalk formed by the gamma and epsilon chains, while a peripheral stalk is formed by the delta and b chains.

The protein resides in the cell inner membrane. The catalysed reaction is ATP + H2O + 4 H(+)(in) = ADP + phosphate + 5 H(+)(out). Functionally, produces ATP from ADP in the presence of a proton gradient across the membrane. The alpha chain is a regulatory subunit. This is ATP synthase subunit alpha from Helicobacter hepaticus (strain ATCC 51449 / 3B1).